A 207-amino-acid chain; its full sequence is Outer-membrane lipoprotein LolB (207 aa).

An N-terminal signal peptide occupies residues 1 to 21; that stretch reads MPLPDFRLIRLLPLAALVLTA. Cys22 carries the N-palmitoyl cysteine lipid modification. Cys22 carries the S-diacylglycerol cysteine lipid modification.

The protein belongs to the LolB family. As to quaternary structure, monomer.

The protein localises to the cell outer membrane. In terms of biological role, plays a critical role in the incorporation of lipoproteins in the outer membrane after they are released by the LolA protein. The protein is Outer-membrane lipoprotein LolB of Escherichia coli O7:K1 (strain IAI39 / ExPEC).